The sequence spans 334 residues: Phosphate acyltransferase (334 aa).

It belongs to the PlsX family. As to quaternary structure, homodimer. Probably interacts with PlsY.

The protein localises to the cytoplasm. It catalyses the reaction a fatty acyl-[ACP] + phosphate = an acyl phosphate + holo-[ACP]. The protein operates within lipid metabolism; phospholipid metabolism. Its function is as follows. Catalyzes the reversible formation of acyl-phosphate (acyl-PO(4)) from acyl-[acyl-carrier-protein] (acyl-ACP). This enzyme utilizes acyl-ACP as fatty acyl donor, but not acyl-CoA. The sequence is that of Phosphate acyltransferase from Desulfitobacterium hafniense (strain DSM 10664 / DCB-2).